A 399-amino-acid chain; its full sequence is Serine/threonine-protein kinase PKZ1 (399 aa).

The tract at residues 30–50 (PMQCAYQTQSHSNPEGAKRGR) is disordered. Positions 92-371 (WQLFDQIGAG…ADQMLQHPWM (280 aa)) constitute a Protein kinase domain. ATP is bound by residues 98–106 (IGAGAFGVV) and K121. D219 (proton acceptor) is an active-site residue.

This sequence belongs to the protein kinase superfamily. CAMK Ser/Thr protein kinase family. Interacts with BZP1.

The catalysed reaction is L-seryl-[protein] + ATP = O-phospho-L-seryl-[protein] + ADP + H(+). The enzyme catalyses L-threonyl-[protein] + ATP = O-phospho-L-threonyl-[protein] + ADP + H(+). Its function is as follows. May regulate an early stage of the zoospore pathway. In Phytophthora infestans (Potato late blight agent), this protein is Serine/threonine-protein kinase PKZ1.